Here is a 344-residue protein sequence, read N- to C-terminus: Phosphoribosylformylglycinamidine cyclo-ligase (344 aa).

The protein belongs to the AIR synthase family.

Its subcellular location is the cytoplasm. It catalyses the reaction 2-formamido-N(1)-(5-O-phospho-beta-D-ribosyl)acetamidine + ATP = 5-amino-1-(5-phospho-beta-D-ribosyl)imidazole + ADP + phosphate + H(+). It functions in the pathway purine metabolism; IMP biosynthesis via de novo pathway; 5-amino-1-(5-phospho-D-ribosyl)imidazole from N(2)-formyl-N(1)-(5-phospho-D-ribosyl)glycinamide: step 2/2. This is Phosphoribosylformylglycinamidine cyclo-ligase from Neisseria gonorrhoeae (strain ATCC 700825 / FA 1090).